The following is a 496-amino-acid chain: Angiopoietin-2 (496 aa).

A signal peptide spans 1–18 (MWQLVFFALSCDLVLAAA). N-linked (GlcNAc...) asparagine glycans are attached at residues Asn89, Asn119, Asn133, Asn151, Asn240, and Asn304. The stretch at 130–255 (NLLNQTAEQT…KQQHDLMETV (126 aa)) forms a coiled coil. The 221-residue stretch at 275–495 (KEEQIIFRDC…ATTMMIRPAD (221 aa)) folds into the Fibrinogen C-terminal domain. Cys284 and Cys313 are disulfide-bonded. Ca(2+) is bound by residues Asp429, Asp431, Cys433, and Cys435. Intrachain disulfides connect Cys433–Cys435 and Cys437–Cys450.

In terms of assembly, interacts with TEK/TIE2, competing for the same binding site as ANGPT1. Interacts with ITGA5. Interacts with SVEP1/polydom. Interacts with THBD; this interaction significantly inhibits the generation of activated PC and TAFIa/CPB2 by the thrombin/thrombomodulin complex.

It is found in the secreted. Its function is as follows. Binds to TEK/TIE2, competing for the ANGPT1 binding site, and modulating ANGPT1 signaling. Can induce tyrosine phosphorylation of TEK/TIE2 in the absence of ANGPT1. In the absence of angiogenic inducers, such as VEGF, ANGPT2-mediated loosening of cell-matrix contacts may induce endothelial cell apoptosis with consequent vascular regression. In concert with VEGF, it may facilitate endothelial cell migration and proliferation, thus serving as a permissive angiogenic signal. Involved in the regulation of lymphangiogenesis. The chain is Angiopoietin-2 (ANGPT2) from Sus scrofa (Pig).